A 47-amino-acid polypeptide reads, in one-letter code: uncharacterized protein (47 aa).

2 disordered regions span residues 1–20 and 25–47; these read MSTD…EEWQ and EKEK…NRKG. Residues 25–40 show a composition bias toward basic and acidic residues; that stretch reads EKEKDENNRLFQEQKQ.

This is an uncharacterized protein from Dictyostelium discoideum (Social amoeba).